We begin with the raw amino-acid sequence, 411 residues long: Exodeoxyribonuclease 7 large subunit (411 aa).

Belongs to the XseA family. Heterooligomer composed of large and small subunits.

The protein localises to the cytoplasm. It carries out the reaction Exonucleolytic cleavage in either 5'- to 3'- or 3'- to 5'-direction to yield nucleoside 5'-phosphates.. Bidirectionally degrades single-stranded DNA into large acid-insoluble oligonucleotides, which are then degraded further into small acid-soluble oligonucleotides. The chain is Exodeoxyribonuclease 7 large subunit from Mycobacterium sp. (strain KMS).